Consider the following 212-residue polypeptide: Ribonuclease HII (212 aa).

An RNase H type-2 domain is found at 1–205 (MTICGVDEAG…VQDILDRASQ (205 aa)). Positions 7, 8, and 100 each coordinate a divalent metal cation.

Belongs to the RNase HII family. Mn(2+) is required as a cofactor. Mg(2+) serves as cofactor.

It is found in the cytoplasm. It catalyses the reaction Endonucleolytic cleavage to 5'-phosphomonoester.. In terms of biological role, endonuclease that specifically degrades the RNA of RNA-DNA hybrids. The chain is Ribonuclease HII from Methanocorpusculum labreanum (strain ATCC 43576 / DSM 4855 / Z).